Reading from the N-terminus, the 98-residue chain is Citrate lyase acyl carrier protein (98 aa).

Ser-14 is modified (O-(phosphoribosyl dephospho-coenzyme A)serine).

This sequence belongs to the CitD family. In terms of assembly, oligomer with a subunit composition of (alpha,beta,gamma)6.

It is found in the cytoplasm. In terms of biological role, covalent carrier of the coenzyme of citrate lyase. In Escherichia coli O127:H6 (strain E2348/69 / EPEC), this protein is Citrate lyase acyl carrier protein.